The primary structure comprises 250 residues: 3-deoxy-manno-octulosonate cytidylyltransferase (250 aa).

The protein belongs to the KdsB family.

Its subcellular location is the cytoplasm. It carries out the reaction 3-deoxy-alpha-D-manno-oct-2-ulosonate + CTP = CMP-3-deoxy-beta-D-manno-octulosonate + diphosphate. It participates in nucleotide-sugar biosynthesis; CMP-3-deoxy-D-manno-octulosonate biosynthesis; CMP-3-deoxy-D-manno-octulosonate from 3-deoxy-D-manno-octulosonate and CTP: step 1/1. The protein operates within bacterial outer membrane biogenesis; lipopolysaccharide biosynthesis. In terms of biological role, activates KDO (a required 8-carbon sugar) for incorporation into bacterial lipopolysaccharide in Gram-negative bacteria. This Yersinia enterocolitica serotype O:8 / biotype 1B (strain NCTC 13174 / 8081) protein is 3-deoxy-manno-octulosonate cytidylyltransferase.